Here is a 180-residue protein sequence, read N- to C-terminus: MILHKCGLPYFASETEKLIKHLKTSHKVKLGPQKLKKCIIVFKDAVLDTITGRVEEFSPDRFCNAKLPYNIGISQLEDIPCPDIPGDLCPTFTEFLDSFTGGKDDLKKFIRAYFNHLLRSDNLSQRFLYMMGPTGTGKSVFSLVSEVLVGSINTCHTTLARMNQPLGFNLIQFKEDVNCC.

The protein localises to the mitochondrion. This is an uncharacterized protein from Marchantia polymorpha (Common liverwort).